The primary structure comprises 468 residues: ERO1-like protein alpha (468 aa).

A signal peptide spans 1-23 (MGHRWGFLIVFLGAVGLLGSGYG). Disulfide bonds link cysteine 35/cysteine 48, cysteine 37/cysteine 46, cysteine 85/cysteine 391, cysteine 94/cysteine 99, cysteine 94/cysteine 131, cysteine 99/cysteine 104, cysteine 208/cysteine 241, and cysteine 394/cysteine 397. Phosphoserine is present on residues serine 106, serine 143, and serine 145. The FAD site is built by arginine 187, threonine 189, and tryptophan 200. Residues serine 252 and histidine 255 each contribute to the FAD site. Residue asparagine 280 is glycosylated (N-linked (GlcNAc...) asparagine). Residues arginine 287 and arginine 300 each coordinate FAD. The N-linked (GlcNAc...) asparagine glycan is linked to asparagine 384.

This sequence belongs to the EROs family. As to quaternary structure, predominantly monomer. May function both as a monomer and a homodimer. Interacts with PDILT. Interacts with ERP44; the interaction results in retention of ERO1A in the endoplasmic reticulum. FAD serves as cofactor. In terms of processing, the Cys-94/Cys-99 and Cys-394/Cys-397 disulfide bonds constitute the redox-active center. The Cys-94/Cys-99 disulfide bond may accept electron from P4HB and funnel them to the active site disulfide Cys-394/Cys-397. The regulatory Cys-99/Cys-104 disulfide bond stabilizes the other regulatory bond Cys-94/Cys-131. Phosphorylated on Ser-145 by FAM20C in the Golgi which increases its enzymatic activity. Phosphorylation is induced by lactation. It is also induced by hypoxia and reductive stress.

The protein resides in the endoplasmic reticulum membrane. Its subcellular location is the golgi apparatus lumen. It localises to the secreted. It is found in the cell projection. The protein localises to the dendrite. Its activity is regulated as follows. Enzyme activity is tightly regulated to prevent the accumulation of reactive oxygen species in the endoplasmic reticulum. Reversibly down-regulated by the formation of disulfide bonds between the active site Cys-94 and Cys-131, and between Cys-99 and Cys-104. Glutathione may be required to regulate its activity in the endoplasmic reticulum. Oxidoreductase involved in disulfide bond formation in the endoplasmic reticulum. Efficiently reoxidizes P4HB/PDI, the enzyme catalyzing protein disulfide formation, in order to allow P4HB to sustain additional rounds of disulfide formation. Following P4HB reoxidation, passes its electrons to molecular oxygen via FAD, leading to the production of reactive oxygen species (ROS) in the cell. Required for the proper folding of immunoglobulins. Plays an important role in ER stress-induced, CHOP-dependent apoptosis by activating the inositol 1,4,5-trisphosphate receptor IP3R1. This Sus scrofa (Pig) protein is ERO1-like protein alpha.